The following is a 141-amino-acid chain: Hemoglobin subunit alpha (141 aa).

The Globin domain maps to 1-141 (VLSPADKSNV…VSTVLTSKYR (141 aa)). The residue at position 3 (Ser3) is a Phosphoserine. Lys7 and Lys11 each carry N6-succinyllysine. An N6-acetyllysine; alternate modification is found at Lys16. Position 16 is an N6-succinyllysine; alternate (Lys16). Tyr24 is modified (phosphotyrosine). Phosphoserine is present on Ser35. Lys40 is subject to N6-succinyllysine. Ser49 is modified (phosphoserine). His58 contacts O2. His87 lines the heme b pocket. Ser102 bears the Phosphoserine mark. Residue Thr108 is modified to Phosphothreonine. 2 positions are modified to phosphoserine: Ser124 and Ser131. 2 positions are modified to phosphothreonine: Thr134 and Thr137. At Ser138 the chain carries Phosphoserine.

The protein belongs to the globin family. As to quaternary structure, heterotetramer of two alpha chains and two beta chains. In terms of tissue distribution, red blood cells.

Functionally, involved in oxygen transport from the lung to the various peripheral tissues. Hemopressin acts as an antagonist peptide of the cannabinoid receptor CNR1. Hemopressin-binding efficiently blocks cannabinoid receptor CNR1 and subsequent signaling. The protein is Hemoglobin subunit alpha (HBA) of Saguinus oedipus (Cotton-top tamarin).